The sequence spans 130 residues: Small ribosomal subunit protein uS8 (130 aa).

Belongs to the universal ribosomal protein uS8 family. Part of the 30S ribosomal subunit. Contacts proteins S5 and S12.

One of the primary rRNA binding proteins, it binds directly to 16S rRNA central domain where it helps coordinate assembly of the platform of the 30S subunit. This is Small ribosomal subunit protein uS8 from Aeromonas salmonicida (strain A449).